Here is a 134-residue protein sequence, read N- to C-terminus: Small ribosomal subunit protein bS6 (134 aa).

The protein belongs to the bacterial ribosomal protein bS6 family.

Binds together with bS18 to 16S ribosomal RNA. In Chlorobium phaeobacteroides (strain BS1), this protein is Small ribosomal subunit protein bS6.